Reading from the N-terminus, the 1180-residue chain is Neurexin like receptor 1 (1180 aa).

An N-terminal signal peptide occupies residues 1–20 (MSGLCLVLLLSIFAVSQSSG). Residues 21 to 1108 (ECSDVSFSSV…SQNKQDLVSK (1088 aa)) are Extracellular-facing. Positions 124–290 (PITAFDDSSY…LSPNEVHNQC (167 aa)) constitute a Laminin G-like 1 domain. A glycan (N-linked (GlcNAc...) asparagine) is linked at asparagine 229. A disulfide bridge links cysteine 267 with cysteine 290. N-linked (GlcNAc...) asparagine glycans are attached at residues asparagine 302, asparagine 336, asparagine 355, and asparagine 436. The region spanning 444–481 (FQEKCLPNPCENGGGCVQSALDDYVCNCKEGYKGKNCH) is the EGF-like 1 domain. 3 disulfide bridges follow: cysteine 448/cysteine 459, cysteine 453/cysteine 469, and cysteine 471/cysteine 480. N-linked (GlcNAc...) asparagine glycosylation is found at asparagine 522 and asparagine 636. The region spanning 695–863 (TFDPVTFSNR…GVAIGDDGYC (169 aa)) is the Laminin G-like 2 domain. Residues 859 to 896 (DDGYCRPDLCQNGGQCVDKYDGYVCDCSMTPFGGSDCT) form the EGF-like 2 domain. 3 cysteine pairs are disulfide-bonded: cysteine 863–cysteine 874, cysteine 868–cysteine 883, and cysteine 885–cysteine 895. N-linked (GlcNAc...) asparagine glycosylation is found at asparagine 933, asparagine 949, asparagine 978, asparagine 997, asparagine 1011, and asparagine 1052. The chain crosses the membrane as a helical span at residues 1109 to 1129 (AIIGGGILALSLFILCMSSLI). Residues 1130–1180 (CYMRSRPEGVYKTNETGENCSPSRSEEPLVHNTTSNNNNNPTYASNKEYFC) lie on the Cytoplasmic side of the membrane. The span at 1142 to 1152 (TNETGENCSPS) shows a compositional bias: polar residues. The tract at residues 1142–1180 (TNETGENCSPSRSEEPLVHNTTSNNNNNPTYASNKEYFC) is disordered. A compositionally biased stretch (low complexity) spans 1161–1171 (NTTSNNNNNPT).

Belongs to the neurexin family. Interacts (via the intracellular domain) with F-actin; the interaction is required for anchoring F-actin at the membrane for gap junction formation. As to expression, highly expressed in pharyngeal g1 and g2 gland cells, pharyngeal muscle cells and the unilateral GABAergic RIS interneuron (at protein level). Expressed in pm5 pharyngeal muscle cells and the nerve ring.

The protein resides in the cell membrane. The protein localises to the cell junction. It is found in the gap junction. In terms of biological role, required for gap junction formation, playing a role in anchoring the cytoskeletal component F-actin to the membrane of adjacent cells and thus facilitating the formation of gap junction channels in embryonic cells, muscle cells and neuronal cells. Plays a role in maintaining gap junction activity to promote pharyngeal muscle contraction. The sequence is that of Neurexin like receptor 1 from Caenorhabditis elegans.